The sequence spans 208 residues: Attacin-A (208 aa).

A signal peptide spans 1–20 (MQSFKICFFISCLSVVLVKG). The propeptide occupies 21 to 47 (QFGGTVSSNPNGGLDVNARLSKTIGDP).

As to expression, hemolymph and fat body.

The protein resides in the secreted. Functionally, hemolymph antibacterial protein against Gram-negative bacteria. The sequence is that of Attacin-A from Glossina morsitans morsitans (Savannah tsetse fly).